Here is a 245-residue protein sequence, read N- to C-terminus: NAD(P)H-quinone oxidoreductase subunit K (245 aa).

Residues C58, C59, C123, and C154 each contribute to the [4Fe-4S] cluster site.

It belongs to the complex I 20 kDa subunit family. NDH-1 can be composed of about 15 different subunits; different subcomplexes with different compositions have been identified which probably have different functions. Requires [4Fe-4S] cluster as cofactor.

It localises to the cellular thylakoid membrane. It carries out the reaction a plastoquinone + NADH + (n+1) H(+)(in) = a plastoquinol + NAD(+) + n H(+)(out). The catalysed reaction is a plastoquinone + NADPH + (n+1) H(+)(in) = a plastoquinol + NADP(+) + n H(+)(out). NDH-1 shuttles electrons from an unknown electron donor, via FMN and iron-sulfur (Fe-S) centers, to quinones in the respiratory and/or the photosynthetic chain. The immediate electron acceptor for the enzyme in this species is believed to be plastoquinone. Couples the redox reaction to proton translocation, and thus conserves the redox energy in a proton gradient. Cyanobacterial NDH-1 also plays a role in inorganic carbon-concentration. This Trichormus variabilis (strain ATCC 29413 / PCC 7937) (Anabaena variabilis) protein is NAD(P)H-quinone oxidoreductase subunit K.